A 149-amino-acid chain; its full sequence is 3-dehydroquinate dehydratase (149 aa).

Catalysis depends on Y26, which acts as the Proton acceptor. Residues N77, H83, and D90 each contribute to the substrate site. The active-site Proton donor is H103. Substrate is bound by residues 104 to 105 (LS) and R114.

The protein belongs to the type-II 3-dehydroquinase family. As to quaternary structure, homododecamer.

It carries out the reaction 3-dehydroquinate = 3-dehydroshikimate + H2O. Its pathway is metabolic intermediate biosynthesis; chorismate biosynthesis; chorismate from D-erythrose 4-phosphate and phosphoenolpyruvate: step 3/7. In terms of biological role, catalyzes a trans-dehydration via an enolate intermediate. This Haemophilus influenzae (strain 86-028NP) protein is 3-dehydroquinate dehydratase.